The sequence spans 553 residues: Solute carrier family 22 member 2 (553 aa).

Topologically, residues 1–21 are cytoplasmic; the sequence is MPTVDDILEHIGEFHLFQKQT. Residues 22–42 form a helical membrane-spanning segment; it reads FFLLALLSGAFTPIYVGIVFL. At 43 to 150 the chain is on the extracellular side; the sequence is GFTPNHHCRS…LVCAHSWMLD (108 aa). A glycan (N-linked (GlcNAc...) asparagine) is linked at asparagine 71. A helical membrane pass occupies residues 151–171; it reads LFQSLVNVGFFIGAVGIGYLA. Residues 172–177 lie on the Cytoplasmic side of the membrane; the sequence is DRFGRK. A helical membrane pass occupies residues 178–198; the sequence is FCLLVTILINAISGVLMAISP. The Extracellular portion of the chain corresponds to 199–210; it reads NYAWMLVFRFLQ. Residues 211-231 form a helical membrane-spanning segment; that stretch reads GLVSKAGWLIGYILITEFVGL. Over 232–238 the chain is Cytoplasmic; the sequence is GYRRTVG. The chain crosses the membrane as a helical span at residues 239 to 259; sequence ICYQIAFTVGLLILAGVAYAL. Over 260-263 the chain is Extracellular; sequence PNWR. The chain crosses the membrane as a helical span at residues 264-284; sequence WLQFAVTLPNFCFLLYFWCIP. Positions 284 to 288 match the Proline-rich sequence motif; it reads PESPR. Residues 285-348 are Cytoplasmic-facing; that stretch reads ESPRWLISQN…VRTPQIRKHT (64 aa). Residues 349 to 369 form a helical membrane-spanning segment; the sequence is LILMYNWFTSSVLYQGLIMHM. Topologically, residues 370–375 are extracellular; it reads GLAGDN. Residues 376 to 396 traverse the membrane as a helical segment; the sequence is IYLDFFYSALVEFPAAFIIIL. At 397–404 the chain is on the cytoplasmic side; it reads TIDRIGRR. The chain crosses the membrane as a helical span at residues 405 to 425; the sequence is YPWAVSNMVAGAACLASVFIP. Over 426–432 the chain is Extracellular; sequence DDLQWLK. A helical membrane pass occupies residues 433–453; the sequence is ITVACLGRMGITIAYEMVCLV. Over 454–464 the chain is Cytoplasmic; that stretch reads NAELYPTYIRN. The helical transmembrane segment at 465–485 threads the bilayer; sequence LAVLVCSSMCDIGGIVTPFLV. Residues 486–494 lie on the Extracellular side of the membrane; it reads YRLTDIWLE. The helical transmembrane segment at 495–515 threads the bilayer; the sequence is FPLVVFAVVGLVAGGLVLLLP. Residues 516-553 lie on the Cytoplasmic side of the membrane; sequence ETKGKALPETIEDAEKMQRPRKKKEKRIYLQVKKAELS.

Belongs to the major facilitator (TC 2.A.1) superfamily. Organic cation transporter (TC 2.A.1.19) family. Tyrosine phosphorylated by tyrosine-protein kinase YES1. Expressed in kidney and ureter. To a lower extent, also expressed in brain and embryo.

The protein localises to the basolateral cell membrane. It is found in the basal cell membrane. It localises to the apical cell membrane. The catalysed reaction is (R)-noradrenaline(out) = (R)-noradrenaline(in). It carries out the reaction (R)-adrenaline(out) = (R)-adrenaline(in). It catalyses the reaction serotonin(out) = serotonin(in). The enzyme catalyses dopamine(out) = dopamine(in). The catalysed reaction is histamine(out) = histamine(in). It carries out the reaction thiamine(in) = thiamine(out). It catalyses the reaction creatinine(in) = creatinine(out). The enzyme catalyses 1-methylnicotinamide(out) = 1-methylnicotinamide(in). The catalysed reaction is guanidine(out) = guanidine(in). It carries out the reaction choline(out) = choline(in). It catalyses the reaction agmatine(out) = agmatine(in). The enzyme catalyses putrescine(out) = putrescine(in). The catalysed reaction is spermidine(in) = spermidine(out). It carries out the reaction tyramine(in) = tyramine(out). It catalyses the reaction L-histidyl-L-proline diketopiperazine(in) = L-histidyl-L-proline diketopiperazine(out). The enzyme catalyses (R)-salsolinol(in) = (R)-salsolinol(out). The catalysed reaction is N-methyl-(R)-salsolinol(in) = N-methyl-(R)-salsolinol(out). It carries out the reaction acetylcholine(in) = acetylcholine(out). It catalyses the reaction prostaglandin F2alpha(out) = prostaglandin F2alpha(in). The enzyme catalyses prostaglandin E2(out) = prostaglandin E2(in). With respect to regulation, tyrosine phosphorylation of the transporter leads to activation of the transport activity. TEA uptake is activated by tyrosine phosphorylation. Inhibited by cGMP, most likely through a cGMP-binding protein that interacts with OCT2. Electrogenic voltage-dependent transporter that mediates the transport of a variety of organic cations such as endogenous bioactive amines, cationic drugs and xenobiotics. Functions as a Na(+)-independent, bidirectional uniporter. Cation cellular uptake or release is driven by the electrochemical potential, i.e. membrane potential and concentration gradient. However, may also engage electroneutral cation exchange when saturating concentrations of cation substrates are reached. Predominantly expressed at the basolateral membrane of hepatocytes and proximal tubules and involved in the uptake and disposition of cationic compounds by hepatic and renal clearance from the blood flow. Implicated in monoamine neurotransmitters uptake such as histamine, dopamine, adrenaline/epinephrine, noradrenaline/norepinephrine, serotonin and tyramine, thereby supporting a physiological role in the central nervous system by regulating interstitial concentrations of neurotransmitters. Also capable of transporting dopaminergic neuromodulators cyclo(his-pro), salsolinol and N-methyl-salsolinol, thereby involved in the maintenance of dopaminergic cell integrity in the central nervous system. Mediates the bidirectional transport of acetylcholine (ACh) at the apical membrane of ciliated cell in airway epithelium, thereby playing a role in luminal release of ACh from bronchial epithelium. Also transports guanidine and endogenous monoamines such as vitamin B1/thiamine, creatinine and N-1-methylnicotinamide (NMN). Mediates the uptake and efflux of quaternary ammonium compound choline. Mediates the bidirectional transport of polyamine agmatine and the uptake of polyamines putrescine and spermidine. Able to transport non-amine endogenous compounds such as prostaglandin E2 (PGE2) and prostaglandin F2-alpha (PGF2-alpha). Also involved in the uptake of xenobiotic 4-(4-(dimethylamino)styryl)-N-methylpyridinium (ASP). May contribute to regulate the transport of organic compounds in testis across the blood-testis-barrier. This is Solute carrier family 22 member 2 from Mus musculus (Mouse).